We begin with the raw amino-acid sequence, 143 residues long: Large ribosomal subunit protein uL15 (143 aa).

A disordered region spans residues 1–59 (MELNTITPGQGAKHAKRRVGRGIGSGLGKTAGRGHKGQKSRSGGYHKVGFEGGQMPMQR). The segment covering 21–31 (RGIGSGLGKTA) has biased composition (gly residues).

Belongs to the universal ribosomal protein uL15 family. In terms of assembly, part of the 50S ribosomal subunit.

Its function is as follows. Binds to the 23S rRNA. The protein is Large ribosomal subunit protein uL15 of Polaromonas naphthalenivorans (strain CJ2).